The chain runs to 358 residues: UDP-N-acetylglucosamine--N-acetylmuramyl-(pentapeptide) pyrophosphoryl-undecaprenol N-acetylglucosamine transferase (358 aa).

UDP-N-acetyl-alpha-D-glucosamine is bound by residues 12 to 14 (TGG), Asn124, Arg162, Ser185, Ile242, 261 to 266 (ALTVSE), and Gln287.

This sequence belongs to the glycosyltransferase 28 family. MurG subfamily.

The protein resides in the cell inner membrane. The catalysed reaction is di-trans,octa-cis-undecaprenyl diphospho-N-acetyl-alpha-D-muramoyl-L-alanyl-D-glutamyl-meso-2,6-diaminopimeloyl-D-alanyl-D-alanine + UDP-N-acetyl-alpha-D-glucosamine = di-trans,octa-cis-undecaprenyl diphospho-[N-acetyl-alpha-D-glucosaminyl-(1-&gt;4)]-N-acetyl-alpha-D-muramoyl-L-alanyl-D-glutamyl-meso-2,6-diaminopimeloyl-D-alanyl-D-alanine + UDP + H(+). The protein operates within cell wall biogenesis; peptidoglycan biosynthesis. Its function is as follows. Cell wall formation. Catalyzes the transfer of a GlcNAc subunit on undecaprenyl-pyrophosphoryl-MurNAc-pentapeptide (lipid intermediate I) to form undecaprenyl-pyrophosphoryl-MurNAc-(pentapeptide)GlcNAc (lipid intermediate II). This is UDP-N-acetylglucosamine--N-acetylmuramyl-(pentapeptide) pyrophosphoryl-undecaprenol N-acetylglucosamine transferase from Pseudoalteromonas translucida (strain TAC 125).